Reading from the N-terminus, the 71-residue chain is UPF0346 protein BCQ_2236 (71 aa).

This sequence belongs to the UPF0346 family.

The sequence is that of UPF0346 protein BCQ_2236 from Bacillus cereus (strain Q1).